Consider the following 249-residue polypeptide: MDINGNAFVVGSGSGIGRACALGLAKGGAKGILIADINLEAANRVATECRGATKYMIEIFERIDYCINCAGIGVQLARNISEADFGEFSRFLQIHVEGTFLLVRSVSAAMQLQELRPIDPTNPGRGGARGSIVTLGSGNSFAAAPHLVQYTAAKHAVLGVTKNAALDNAAHGIRVNCVCPTWVETPMIQSARDGGVEIDSWVKGMVPLGRIATAEEVADTVIFFCSPRSSYATGCGFLLDGGTTLTCHV.

NADP(+) contacts are provided by I16, R104, Y150, K154, V183, and T185. Y150 functions as the Proton donor in the catalytic mechanism. K154 serves as the catalytic Lowers pKa of active site Tyr.

It belongs to the short-chain dehydrogenases/reductases (SDR) family.

Its pathway is secondary metabolite biosynthesis. Short-chain dehydrogenase; part of the gene cluster that mediates the biosynthesis of virensols and trichoxide, fungal natural products that contain or are derived from a salicylaldehyde core. The pathway begins with the synthesis of the reduced chain in virensol C by the highly reducing polyketide synthase virA via condensation of one acetate and 8 malonate units. VirA has interesting programming rules since the first 2 ketides are fully reduced, the 3 following ketides undergo beta-dehydration, and the last 3 ketides are only reduced to beta-hydroxys to yield the trihydroxy portion. The production of aldehyde virensol C by virA alone is surprising, since virA does not contain a reductase (R) domain that is typically associated with reductive product release in HRPKS. The cupin-domain enzyme virC is involved in enhancing virA product turnover. The short-chain dehydrogenase virB then oxidizes the C-7 alcohol of virensol C to a ketone, yielding virensol D. Virensol D is further transformed to salicylaldehyde 5-deoxyaurocitrin by the short-chain dehydrogenase virD. VirD catalyzes the dehydrogenation of C-3 to form the beta-ketone aldehyde, which is followed by the generation of the nucleophilic C-2 that is required for the intramolecular aldol condensation between C-2 and C-7, itself followed by dehydration and aromatization which leads to salicylaldehyde 5-deoxyaurocitrin. While the dehydrogenation of virensol D is definitely catalyzed by virD, the aldol condensation and dehydration may be uncatalyzed or assisted by virD. The short chain dehydrogenase virG then converts salicylaldehyde 5-deoxyaurocitrin into virensol B which is further hydroxylated by the cytochrome P450 monooxygenase virE to yield the hydroquinone virensol A. VirI then may oxidize virensol A to form the quinone, while virH performs the epoxidation. Finally, the two remaining short-chain dehydrogenases, virK and virL, are probably responsible for reducing the ketones to the corresponding alcohols to furnish the epoxycyclohexanol structure in trichoxide. The chain is Short-chain dehydrogenase virB from Hypocrea virens (strain Gv29-8 / FGSC 10586) (Gliocladium virens).